A 276-amino-acid chain; its full sequence is CDP-diacylglycerol--serine O-phosphatidyltransferase (276 aa).

The disordered stretch occupies residues methionine 1–isoleucine 21. 6 positions are modified to phosphoserine: serine 4, serine 34, serine 42, serine 46, serine 47, and serine 50. 4 helical membrane passes run methionine 82–leucine 102, isoleucine 163–leucine 183, tyrosine 210–valine 230, and glutamine 248–serine 268.

This sequence belongs to the CDP-alcohol phosphatidyltransferase class-I family. The cofactor is Mn(2+). Requires Mg(2+) as cofactor.

The protein localises to the microsome membrane. It is found in the endoplasmic reticulum membrane. It localises to the mitochondrion outer membrane. It catalyses the reaction a CDP-1,2-diacyl-sn-glycerol + L-serine = a 1,2-diacyl-sn-glycero-3-phospho-L-serine + CMP + H(+). Its pathway is phospholipid metabolism; phosphatidylethanolamine biosynthesis; phosphatidylethanolamine from CDP-diacylglycerol: step 1/2. Its function is as follows. Catalyzes the synthesis of phosphatidylserine (PtdSer). The protein is CDP-diacylglycerol--serine O-phosphatidyltransferase (CHO1) of Saccharomyces cerevisiae (strain ATCC 204508 / S288c) (Baker's yeast).